Here is a 51-residue protein sequence, read N- to C-terminus: Zinc metalloproteinase-disintegrin-like crovidisin (51 aa).

Residues 1–12 (AMVTKNNGDLDK) enclose the Peptidase M12B domain. The Disintegrin domain maps to 13–18 (SGTECR). N29 carries N-linked (GlcNAc...) asparagine glycosylation.

The protein belongs to the venom metalloproteinase (M12B) family. P-III subfamily. P-IIIa sub-subfamily. Monomer. It depends on Zn(2+) as a cofactor. In terms of tissue distribution, expressed by the venom gland.

The protein resides in the secreted. Its function is as follows. Snake venom zinc metalloproteinase-disintegrin-like that blocks the interaction between platelets and collagen fibers through its binding to collagen fibers, resulting in the blockade of collagen-mediated platelet functions such as adhesion, release reaction, thromboxane formation, and aggregation. Binds selectively to collagen type I with high affinity. Also exerts proteolytic activity to matrix. The sequence is that of Zinc metalloproteinase-disintegrin-like crovidisin from Crotalus viridis viridis (Prairie rattlesnake).